The primary structure comprises 236 residues: 2,3,4,5-tetrahydropyridine-2,6-dicarboxylate N-acetyltransferase (236 aa).

It belongs to the transferase hexapeptide repeat family. DapH subfamily.

The catalysed reaction is (S)-2,3,4,5-tetrahydrodipicolinate + acetyl-CoA + H2O = L-2-acetamido-6-oxoheptanedioate + CoA. Its pathway is amino-acid biosynthesis; L-lysine biosynthesis via DAP pathway; LL-2,6-diaminopimelate from (S)-tetrahydrodipicolinate (acetylase route): step 1/3. Catalyzes the transfer of an acetyl group from acetyl-CoA to tetrahydrodipicolinate. This chain is 2,3,4,5-tetrahydropyridine-2,6-dicarboxylate N-acetyltransferase, found in Clostridium botulinum (strain ATCC 19397 / Type A).